The sequence spans 306 residues: Aspartate carbamoyltransferase catalytic subunit (306 aa).

Residues Arg-55 and Thr-56 each coordinate carbamoyl phosphate. Lys-84 is an L-aspartate binding site. Positions 105, 133, and 136 each coordinate carbamoyl phosphate. L-aspartate-binding residues include Arg-166 and Arg-227. Carbamoyl phosphate-binding residues include Leu-265 and Pro-266.

Belongs to the aspartate/ornithine carbamoyltransferase superfamily. ATCase family. Heterododecamer (2C3:3R2) of six catalytic PyrB chains organized as two trimers (C3), and six regulatory PyrI chains organized as three dimers (R2).

The enzyme catalyses carbamoyl phosphate + L-aspartate = N-carbamoyl-L-aspartate + phosphate + H(+). It participates in pyrimidine metabolism; UMP biosynthesis via de novo pathway; (S)-dihydroorotate from bicarbonate: step 2/3. Its function is as follows. Catalyzes the condensation of carbamoyl phosphate and aspartate to form carbamoyl aspartate and inorganic phosphate, the committed step in the de novo pyrimidine nucleotide biosynthesis pathway. In Aeromonas hydrophila subsp. hydrophila (strain ATCC 7966 / DSM 30187 / BCRC 13018 / CCUG 14551 / JCM 1027 / KCTC 2358 / NCIMB 9240 / NCTC 8049), this protein is Aspartate carbamoyltransferase catalytic subunit.